The following is a 269-amino-acid chain: Tryptophan synthase alpha chain (269 aa).

Active-site proton acceptor residues include Glu-49 and Asp-60.

The protein belongs to the TrpA family. In terms of assembly, tetramer of two alpha and two beta chains.

It carries out the reaction (1S,2R)-1-C-(indol-3-yl)glycerol 3-phosphate + L-serine = D-glyceraldehyde 3-phosphate + L-tryptophan + H2O. The protein operates within amino-acid biosynthesis; L-tryptophan biosynthesis; L-tryptophan from chorismate: step 5/5. The alpha subunit is responsible for the aldol cleavage of indoleglycerol phosphate to indole and glyceraldehyde 3-phosphate. The polypeptide is Tryptophan synthase alpha chain (Pseudomonas putida (strain ATCC 47054 / DSM 6125 / CFBP 8728 / NCIMB 11950 / KT2440)).